A 237-amino-acid chain; its full sequence is Class B acid phosphatase (237 aa).

The first 25 residues, 1–25 (MRKLTLAFAAASLLFTLNSAVVARA), serve as a signal peptide directing secretion. The Nucleophile role is filled by Asp-69. The Mg(2+) site is built by Asp-69 and Asp-71. Asp-71 acts as the Proton donor in catalysis. Substrate-binding positions include 137–138 (TG) and Lys-177. Asp-192 contributes to the Mg(2+) binding site.

It belongs to the class B bacterial acid phosphatase family. In terms of assembly, homotetramer. Requires Mg(2+) as cofactor.

The protein localises to the periplasm. The catalysed reaction is a phosphate monoester + H2O = an alcohol + phosphate. Its function is as follows. Dephosphorylates several organic phosphate monoesters. Also has a phosphotransferase activity catalyzing the transfer of low-energy phosphate groups from organic phosphate monoesters to free hydroxyl groups of various organic compounds. The chain is Class B acid phosphatase from Klebsiella pneumoniae (strain 342).